The sequence spans 657 residues: UvrABC system protein B (657 aa).

Residues A25–N163 enclose the Helicase ATP-binding domain. Position 38–45 (G38–T45) interacts with ATP. The short motif at Y91–I114 is the Beta-hairpin element. The DEAD box signature appears at L130 to D133. The Helicase C-terminal domain maps to Q433–L599. Positions A622–L657 constitute a UVR domain.

This sequence belongs to the UvrB family. As to quaternary structure, forms a heterotetramer with UvrA during the search for lesions. Interacts with UvrC in an incision complex.

It localises to the cytoplasm. Functionally, the UvrABC repair system catalyzes the recognition and processing of DNA lesions. A damage recognition complex composed of 2 UvrA and 2 UvrB subunits scans DNA for abnormalities. Upon binding of the UvrA(2)B(2) complex to a putative damaged site, the DNA wraps around one UvrB monomer. DNA wrap is dependent on ATP binding by UvrB and probably causes local melting of the DNA helix, facilitating insertion of UvrB beta-hairpin between the DNA strands. Then UvrB probes one DNA strand for the presence of a lesion. If a lesion is found the UvrA subunits dissociate and the UvrB-DNA preincision complex is formed. This complex is subsequently bound by UvrC and the second UvrB is released. If no lesion is found, the DNA wraps around the other UvrB subunit that will check the other stand for damage. The polypeptide is UvrABC system protein B (Campylobacter hominis (strain ATCC BAA-381 / DSM 21671 / CCUG 45161 / LMG 19568 / NCTC 13146 / CH001A)).